The following is a 66-amino-acid chain: Large ribosomal subunit protein bL33c (66 aa).

This sequence belongs to the bacterial ribosomal protein bL33 family.

The protein localises to the plastid. It is found in the chloroplast. This is Large ribosomal subunit protein bL33c from Jasminum nudiflorum (Winter jasmine).